The chain runs to 263 residues: Formamidopyrimidine-DNA glycosylase (263 aa).

Proline 2 serves as the catalytic Schiff-base intermediate with DNA. Residue glutamate 3 is the Proton donor of the active site. Catalysis depends on lysine 59, which acts as the Proton donor; for beta-elimination activity. Residues histidine 93 and arginine 111 each contribute to the DNA site. Residues 229–263 (KVYGKNGSLCVRCNNVLIRERHAGRSTHYCPHCQK) form an FPG-type zinc finger. The active-site Proton donor; for delta-elimination activity is arginine 253.

This sequence belongs to the FPG family. In terms of assembly, monomer. It depends on Zn(2+) as a cofactor.

It catalyses the reaction Hydrolysis of DNA containing ring-opened 7-methylguanine residues, releasing 2,6-diamino-4-hydroxy-5-(N-methyl)formamidopyrimidine.. The enzyme catalyses 2'-deoxyribonucleotide-(2'-deoxyribose 5'-phosphate)-2'-deoxyribonucleotide-DNA = a 3'-end 2'-deoxyribonucleotide-(2,3-dehydro-2,3-deoxyribose 5'-phosphate)-DNA + a 5'-end 5'-phospho-2'-deoxyribonucleoside-DNA + H(+). Functionally, involved in base excision repair of DNA damaged by oxidation or by mutagenic agents. Acts as a DNA glycosylase that recognizes and removes damaged bases. Has a preference for oxidized purines, such as 7,8-dihydro-8-oxoguanine (8-oxoG). Has AP (apurinic/apyrimidinic) lyase activity and introduces nicks in the DNA strand. Cleaves the DNA backbone by beta-delta elimination to generate a single-strand break at the site of the removed base with both 3'- and 5'-phosphates. This chain is Formamidopyrimidine-DNA glycosylase, found in Carboxydothermus hydrogenoformans (strain ATCC BAA-161 / DSM 6008 / Z-2901).